Here is a 202-residue protein sequence, read N- to C-terminus: MARQGTIHRVTGETDVKVRLDLDGSGQCQASTGVPFLDHMLHQISSHGLIDLEINAVGDTHIDDHHTNEDVGIAVGQALAQALGDRRGIHRFGHFVAPLDEALVQVALDCSGRPHLSYSLAIPSQRIGTYDTELVKEFFVAVVNNSGLTLHIRQLDGVNSHHIVEACFKAFARALRMATEVDPRRAGAIPSSKGVLEQAGAS.

This sequence belongs to the imidazoleglycerol-phosphate dehydratase family.

Its subcellular location is the cytoplasm. It carries out the reaction D-erythro-1-(imidazol-4-yl)glycerol 3-phosphate = 3-(imidazol-4-yl)-2-oxopropyl phosphate + H2O. The protein operates within amino-acid biosynthesis; L-histidine biosynthesis; L-histidine from 5-phospho-alpha-D-ribose 1-diphosphate: step 6/9. The sequence is that of Imidazoleglycerol-phosphate dehydratase from Synechococcus sp. (strain CC9605).